The sequence spans 216 residues: Probable transaldolase (216 aa).

The active-site Schiff-base intermediate with substrate is K83.

This sequence belongs to the transaldolase family. Type 3B subfamily.

The protein resides in the cytoplasm. The catalysed reaction is D-sedoheptulose 7-phosphate + D-glyceraldehyde 3-phosphate = D-erythrose 4-phosphate + beta-D-fructose 6-phosphate. Its pathway is carbohydrate degradation; pentose phosphate pathway; D-glyceraldehyde 3-phosphate and beta-D-fructose 6-phosphate from D-ribose 5-phosphate and D-xylulose 5-phosphate (non-oxidative stage): step 2/3. In terms of biological role, transaldolase is important for the balance of metabolites in the pentose-phosphate pathway. In Thermosipho africanus (strain TCF52B), this protein is Probable transaldolase.